Here is a 457-residue protein sequence, read N- to C-terminus: Siroheme synthase (457 aa).

The precorrin-2 dehydrogenase /sirohydrochlorin ferrochelatase stretch occupies residues 1 to 204 (MDHLPIFCQL…ADAKAVSEIT (204 aa)). NAD(+) contacts are provided by residues 22 to 23 (DV) and 43 to 44 (LA). The residue at position 128 (Ser-128) is a Phosphoserine. Residues 216–457 (GEVVLVGAGP…RDKLNWFSNH (242 aa)) form a uroporphyrinogen-III C-methyltransferase region. Residue Pro-225 coordinates S-adenosyl-L-methionine. The active-site Proton acceptor is Asp-248. Catalysis depends on Lys-270, which acts as the Proton donor. Residues 301 to 303 (GGD), Ile-306, 331 to 332 (TA), Met-382, and Gly-411 each bind S-adenosyl-L-methionine.

In the N-terminal section; belongs to the precorrin-2 dehydrogenase / sirohydrochlorin ferrochelatase family. It in the C-terminal section; belongs to the precorrin methyltransferase family.

It catalyses the reaction uroporphyrinogen III + 2 S-adenosyl-L-methionine = precorrin-2 + 2 S-adenosyl-L-homocysteine + H(+). The enzyme catalyses precorrin-2 + NAD(+) = sirohydrochlorin + NADH + 2 H(+). The catalysed reaction is siroheme + 2 H(+) = sirohydrochlorin + Fe(2+). It participates in cofactor biosynthesis; adenosylcobalamin biosynthesis; precorrin-2 from uroporphyrinogen III: step 1/1. It functions in the pathway cofactor biosynthesis; adenosylcobalamin biosynthesis; sirohydrochlorin from precorrin-2: step 1/1. The protein operates within porphyrin-containing compound metabolism; siroheme biosynthesis; precorrin-2 from uroporphyrinogen III: step 1/1. Its pathway is porphyrin-containing compound metabolism; siroheme biosynthesis; siroheme from sirohydrochlorin: step 1/1. It participates in porphyrin-containing compound metabolism; siroheme biosynthesis; sirohydrochlorin from precorrin-2: step 1/1. Multifunctional enzyme that catalyzes the SAM-dependent methylations of uroporphyrinogen III at position C-2 and C-7 to form precorrin-2 via precorrin-1. Then it catalyzes the NAD-dependent ring dehydrogenation of precorrin-2 to yield sirohydrochlorin. Finally, it catalyzes the ferrochelation of sirohydrochlorin to yield siroheme. The polypeptide is Siroheme synthase (Citrobacter koseri (strain ATCC BAA-895 / CDC 4225-83 / SGSC4696)).